The primary structure comprises 605 residues: Aspartate--tRNA(Asp/Asn) ligase (605 aa).

Glutamate 172 serves as a coordination point for L-aspartate. The tract at residues 196–199 is aspartate; it reads QLFK. Residue arginine 218 coordinates L-aspartate. Residues 218–220 and glutamine 227 each bind ATP; that span reads RDE. Histidine 455 contributes to the L-aspartate binding site. ATP is bound at residue glutamate 489. Residue arginine 496 coordinates L-aspartate. An ATP-binding site is contributed by 541-544; that stretch reads GLDR.

Belongs to the class-II aminoacyl-tRNA synthetase family. Type 1 subfamily. Homodimer.

The protein resides in the cytoplasm. The enzyme catalyses tRNA(Asx) + L-aspartate + ATP = L-aspartyl-tRNA(Asx) + AMP + diphosphate. Aspartyl-tRNA synthetase with relaxed tRNA specificity since it is able to aspartylate not only its cognate tRNA(Asp) but also tRNA(Asn). Reaction proceeds in two steps: L-aspartate is first activated by ATP to form Asp-AMP and then transferred to the acceptor end of tRNA(Asp/Asn). This is Aspartate--tRNA(Asp/Asn) ligase from Ralstonia nicotianae (strain ATCC BAA-1114 / GMI1000) (Ralstonia solanacearum).